Consider the following 289-residue polypeptide: Ribosomal protein L11 methyltransferase (289 aa).

S-adenosyl-L-methionine is bound by residues threonine 142, glycine 163, aspartate 185, and asparagine 226.

Belongs to the methyltransferase superfamily. PrmA family.

It is found in the cytoplasm. It carries out the reaction L-lysyl-[protein] + 3 S-adenosyl-L-methionine = N(6),N(6),N(6)-trimethyl-L-lysyl-[protein] + 3 S-adenosyl-L-homocysteine + 3 H(+). Functionally, methylates ribosomal protein L11. The polypeptide is Ribosomal protein L11 methyltransferase (Legionella pneumophila (strain Paris)).